Here is a 218-residue protein sequence, read N- to C-terminus: MTVPRVKICGITRIEDGLAAANAGADAIGLVFYGPSPRAVTARQAAEICASLPPFVTTVALFVDASRAEIEGVLARVPVDLLQFHGNENPQFCDSFNRPWIKAVRMKDDVDLHHYAQIYRNAAGLLIDSYVAGVPGGTGETFNWGRVPKTLPLPVVLAGGLHPGNVAAAVTQVQPWAVDVSGGVEQKNVQGGRSGGIKDASAIRVFINSVKTRGVAGV.

Belongs to the TrpF family.

The catalysed reaction is N-(5-phospho-beta-D-ribosyl)anthranilate = 1-(2-carboxyphenylamino)-1-deoxy-D-ribulose 5-phosphate. The protein operates within amino-acid biosynthesis; L-tryptophan biosynthesis; L-tryptophan from chorismate: step 3/5. The chain is N-(5'-phosphoribosyl)anthranilate isomerase from Alcanivorax borkumensis (strain ATCC 700651 / DSM 11573 / NCIMB 13689 / SK2).